A 169-amino-acid polypeptide reads, in one-letter code: Peptidyl-prolyl cis-trans isomerase (169 aa).

The 164-residue stretch at 5–168 (FFDMTIGGQP…SEVKIAKCGQ (164 aa)) folds into the PPIase cyclophilin-type domain.

It belongs to the cyclophilin-type PPIase family.

The protein localises to the cytoplasm. The enzyme catalyses [protein]-peptidylproline (omega=180) = [protein]-peptidylproline (omega=0). Binds cyclosporin A (CsA). CsA mediates some of its effects via an inhibitory action on PPIase. In terms of biological role, PPIases accelerate the folding of proteins. It catalyzes the cis-trans isomerization of proline imidic peptide bonds in oligopeptides. This chain is Peptidyl-prolyl cis-trans isomerase, found in Unspecified eudicot DB-1992.